The sequence spans 800 residues: Protein MICRORCHIDIA 4 (800 aa).

2 disordered regions span residues 1–76 (MEPI…ARSD) and 552–702 (AKRQ…RTLS). The segment covering 9–18 (NPVTTSTLST) has biased composition (polar residues). The span at 36–47 (ELSSSNEGSELG) shows a compositional bias: low complexity. Composition is skewed to basic and acidic residues over residues 559–578 (SAKDTEKDTEDRESSPEFDP) and 628–641 (VSKDIGYKSSEKGG). Over residues 666–675 (NSDDDYDCDS) the composition is skewed to acidic residues. Positions 699–766 (RTLSQLEQEN…QASLIDVFAE (68 aa)) form a coiled coil. 2 consecutive short sequence motifs (nuclear localization signal) follow at residues 716 to 723 (DKKEEVFL) and 735 to 742 (LRKTLEAE).

It belongs to the MORC ATPase protein family. As to quaternary structure, homodimer and heterodimer. Component of an RNA-directed DNA methylation (RdDM) complex. Forms homomeric complexes. The cofactor is Mg(2+). It depends on Mn(2+) as a cofactor.

The protein resides in the nucleus. In terms of biological role, exhibits ATPase activity. Binds DNA/RNA in a non-specific manner and exhibits endonuclease activity. Probably involved in DNA repair. Involved in RNA-directed DNA methylation (RdDM) as a component of the RdDM machinery and required for gene silencing. May also be involved in the regulation of chromatin architecture to maintain gene silencing. Together with MORC7, acts to suppress a wide set of non-methylated protein-coding genes, especially involved in pathogen response. Positive regulator of defense against the oomycete Hyaloperonospora arabidopsidis (Hpa). The polypeptide is Protein MICRORCHIDIA 4 (Arabidopsis thaliana (Mouse-ear cress)).